The primary structure comprises 318 residues: HPr kinase/phosphorylase (318 aa).

Catalysis depends on residues H141 and K162. 156–163 serves as a coordination point for ATP; that stretch reads GDSAMGKS. Residue S163 coordinates Mg(2+). D180 serves as the catalytic Proton acceptor; for phosphorylation activity. Proton donor; for dephosphorylation activity. Residues 204 to 213 form an important for the catalytic mechanism of both phosphorylation and dephosphorylation region; that stretch reads LEVRGLGILN. Residue E205 participates in Mg(2+) binding. The active site involves R248. Residues 269 to 274 are important for the catalytic mechanism of dephosphorylation; it reads PVAAGR.

It belongs to the HPrK/P family. Homohexamer. Requires Mg(2+) as cofactor.

The catalysed reaction is [HPr protein]-L-serine + ATP = [HPr protein]-O-phospho-L-serine + ADP + H(+). The enzyme catalyses [HPr protein]-O-phospho-L-serine + phosphate + H(+) = [HPr protein]-L-serine + diphosphate. Functionally, catalyzes the ATP- as well as the pyrophosphate-dependent phosphorylation of a specific serine residue in HPr, a phosphocarrier protein of the phosphoenolpyruvate-dependent sugar phosphotransferase system (PTS). HprK/P also catalyzes the pyrophosphate-producing, inorganic phosphate-dependent dephosphorylation (phosphorolysis) of seryl-phosphorylated HPr (P-Ser-HPr). This chain is HPr kinase/phosphorylase, found in Chromobacterium violaceum (strain ATCC 12472 / DSM 30191 / JCM 1249 / CCUG 213 / NBRC 12614 / NCIMB 9131 / NCTC 9757 / MK).